Here is a 330-residue protein sequence, read N- to C-terminus: Ketol-acid reductoisomerase (NADP(+)) (330 aa).

In terms of domain architecture, KARI N-terminal Rossmann spans 1–181; the sequence is MKVFYDSDFK…GLSRAGVIQT (181 aa). NADP(+)-binding positions include 24–27, Arg-47, Ser-52, and 82–85; these read YGSQ and DELQ. The active site involves His-107. Gly-133 is an NADP(+) binding site. A KARI C-terminal knotted domain is found at 182–327; the sequence is TFKEETETDL…AKLRKMCGLE (146 aa). Positions 190, 194, 226, and 230 each coordinate Mg(2+). A substrate-binding site is contributed by Ser-251.

The protein belongs to the ketol-acid reductoisomerase family. Requires Mg(2+) as cofactor.

The enzyme catalyses (2R)-2,3-dihydroxy-3-methylbutanoate + NADP(+) = (2S)-2-acetolactate + NADPH + H(+). It carries out the reaction (2R,3R)-2,3-dihydroxy-3-methylpentanoate + NADP(+) = (S)-2-ethyl-2-hydroxy-3-oxobutanoate + NADPH + H(+). It functions in the pathway amino-acid biosynthesis; L-isoleucine biosynthesis; L-isoleucine from 2-oxobutanoate: step 2/4. It participates in amino-acid biosynthesis; L-valine biosynthesis; L-valine from pyruvate: step 2/4. Involved in the biosynthesis of branched-chain amino acids (BCAA). Catalyzes an alkyl-migration followed by a ketol-acid reduction of (S)-2-acetolactate (S2AL) to yield (R)-2,3-dihydroxy-isovalerate. In the isomerase reaction, S2AL is rearranged via a Mg-dependent methyl migration to produce 3-hydroxy-3-methyl-2-ketobutyrate (HMKB). In the reductase reaction, this 2-ketoacid undergoes a metal-dependent reduction by NADPH to yield (R)-2,3-dihydroxy-isovalerate. The protein is Ketol-acid reductoisomerase (NADP(+)) of Methanococcus maripaludis (strain C7 / ATCC BAA-1331).